A 221-amino-acid polypeptide reads, in one-letter code: Urease accessory protein UreE (221 aa).

Basic and acidic residues predominate over residues 171–180 (HHGHDHDHGH). The disordered stretch occupies residues 171–221 (HHGHDHDHGHSHSHSHSHSHSHSHSHDHDHDHDHEHDVKGHVHGPGCGHKH). Residues 181–193 (SHSHSHSHSHSHS) are compositionally biased toward basic residues. Basic and acidic residues predominate over residues 194-210 (HSHDHDHDHDHEHDVKG).

Belongs to the UreE family.

The protein localises to the cytoplasm. In terms of biological role, involved in urease metallocenter assembly. Binds nickel. Probably functions as a nickel donor during metallocenter assembly. The sequence is that of Urease accessory protein UreE from Cupriavidus pinatubonensis (strain JMP 134 / LMG 1197) (Cupriavidus necator (strain JMP 134)).